Consider the following 1085-residue polypeptide: Aminopeptidase N (1085 aa).

The required for ER targeting and membrane association; not cleaved signal peptide spans 1 to 30 (MKLTKGCAYKYIIFTVLILANILYDNKKRC). Residues 1–200 (MKLTKGCAYK…VKKNEPKIHY (200 aa)) are sufficient for targeting to the food vacuole. Residues 108 to 130 (EKGDNNNNNHQNNNGNDNKKRLG) are disordered. Positions 112–123 (NNNNNHQNNNGN) are enriched in low complexity. 4 residues coordinate a peptide: glutamate 319, glycine 460, alanine 461, and glutamate 463. Histidine 496 lines the Zn(2+) pocket. Catalysis depends on glutamate 497, which acts as the Proton acceptor. Histidine 500 and glutamate 519 together coordinate Zn(2+).

The protein belongs to the peptidase M1 family. Heterodimer of the p68 form and the p35 form which are derived from the p120 precursor. Zn(2+) serves as cofactor. In terms of processing, the full length protein appears to be cleaved into a 120 kDa precursor. This precursor is then proteolytically cleaved at the N-terminus generating a 96 kDa form which is further processed at the C-terminus into 68 kDa and 35 kDa forms that remain associated.

It localises to the parasitophorous vacuole membrane. Its subcellular location is the nucleus. The protein resides in the cytoplasm. The protein localises to the vacuole lumen. Its activity is regulated as follows. Inhibited by 1,10-phenanthroline, EDTA and bestatin. Inhibited by (Benzyl)Tyr-Ala (BTA). Activity is not affected by phosphoramidin, PMSF, leupeptin, iodoacetamide or pepstatin. Displays aminopeptidase activity with a broad substrate specificity. Preferentially, cleaves after Leu and Met, but also cleaves after Ala and Arg. Low activity towards Lys, Phe, Tyr, Trp, Gln, Ser and Gly and negligible activity towards Glu, Asp, Pro, Ile, Thr, Val, His and Asn. Has dipeptidase activity. Plays a role in the terminal stages of host hemoglobin digestion by cleaving the N-terminal residue of small hemoglobin-derived oligopeptides. The chain is Aminopeptidase N from Plasmodium falciparum (isolate 3D7).